We begin with the raw amino-acid sequence, 222 residues long: GTP cyclohydrolase 1 (222 aa).

The Zn(2+) site is built by Cys111, His114, and Cys182.

Belongs to the GTP cyclohydrolase I family. As to quaternary structure, toroid-shaped homodecamer, composed of two pentamers of five dimers.

It carries out the reaction GTP + H2O = 7,8-dihydroneopterin 3'-triphosphate + formate + H(+). The protein operates within cofactor biosynthesis; 7,8-dihydroneopterin triphosphate biosynthesis; 7,8-dihydroneopterin triphosphate from GTP: step 1/1. The sequence is that of GTP cyclohydrolase 1 from Salmonella choleraesuis (strain SC-B67).